A 228-amino-acid chain; its full sequence is UPF0134 protein MPN_137 (228 aa).

This sequence belongs to the UPF0134 family.

The chain is UPF0134 protein MPN_137 from Mycoplasma pneumoniae (strain ATCC 29342 / M129 / Subtype 1) (Mycoplasmoides pneumoniae).